A 448-amino-acid chain; its full sequence is Methylenetetrahydrofolate--tRNA-(uracil-5-)-methyltransferase TrmFO (448 aa).

13-18 (GAGLAG) provides a ligand contact to FAD.

The protein belongs to the MnmG family. TrmFO subfamily. FAD serves as cofactor.

The protein resides in the cytoplasm. The catalysed reaction is uridine(54) in tRNA + (6R)-5,10-methylene-5,6,7,8-tetrahydrofolate + NADH + H(+) = 5-methyluridine(54) in tRNA + (6S)-5,6,7,8-tetrahydrofolate + NAD(+). The enzyme catalyses uridine(54) in tRNA + (6R)-5,10-methylene-5,6,7,8-tetrahydrofolate + NADPH + H(+) = 5-methyluridine(54) in tRNA + (6S)-5,6,7,8-tetrahydrofolate + NADP(+). In terms of biological role, catalyzes the folate-dependent formation of 5-methyl-uridine at position 54 (M-5-U54) in all tRNAs. The protein is Methylenetetrahydrofolate--tRNA-(uracil-5-)-methyltransferase TrmFO of Streptococcus pyogenes serotype M4 (strain MGAS10750).